The chain runs to 643 residues: Phosphomethylpyrimidine synthase (643 aa).

Residues asparagine 248, methionine 277, tyrosine 306, histidine 342, 362 to 364, 403 to 406, and glutamate 442 each bind substrate; these read SRG and DGLR. Histidine 446 is a binding site for Zn(2+). Tyrosine 469 provides a ligand contact to substrate. Histidine 510 is a binding site for Zn(2+). Cysteine 590, cysteine 593, and cysteine 598 together coordinate [4Fe-4S] cluster.

This sequence belongs to the ThiC family. In terms of assembly, homodimer. The cofactor is [4Fe-4S] cluster.

The enzyme catalyses 5-amino-1-(5-phospho-beta-D-ribosyl)imidazole + S-adenosyl-L-methionine = 4-amino-2-methyl-5-(phosphooxymethyl)pyrimidine + CO + 5'-deoxyadenosine + formate + L-methionine + 3 H(+). It functions in the pathway cofactor biosynthesis; thiamine diphosphate biosynthesis. In terms of biological role, catalyzes the synthesis of the hydroxymethylpyrimidine phosphate (HMP-P) moiety of thiamine from aminoimidazole ribotide (AIR) in a radical S-adenosyl-L-methionine (SAM)-dependent reaction. This is Phosphomethylpyrimidine synthase from Burkholderia ambifaria (strain MC40-6).